The sequence spans 78 residues: D-alanyl carrier protein (78 aa).

Residues 1–78 (MAFRENVLEI…MIITQLEALK (78 aa)) form the Carrier domain. An O-(pantetheine 4'-phosphoryl)serine modification is found at serine 36.

It belongs to the DltC family. 4'-phosphopantetheine is transferred from CoA to a specific serine of apo-DCP.

It is found in the cytoplasm. The protein operates within cell wall biogenesis; lipoteichoic acid biosynthesis. Functionally, carrier protein involved in the D-alanylation of lipoteichoic acid (LTA). The loading of thioester-linked D-alanine onto DltC is catalyzed by D-alanine--D-alanyl carrier protein ligase DltA. The DltC-carried D-alanyl group is further transferred to cell membrane phosphatidylglycerol (PG) by forming an ester bond, probably catalyzed by DltD. D-alanylation of LTA plays an important role in modulating the properties of the cell wall in Gram-positive bacteria, influencing the net charge of the cell wall. The chain is D-alanyl carrier protein from Listeria welshimeri serovar 6b (strain ATCC 35897 / DSM 20650 / CCUG 15529 / CIP 8149 / NCTC 11857 / SLCC 5334 / V8).